The chain runs to 303 residues: Sulfotransferase 6B1 (303 aa).

Residue Lys-65 to Trp-70 coordinates 3'-phosphoadenylyl sulfate. The active-site Proton acceptor is the His-118. 3'-phosphoadenylyl sulfate-binding positions include Arg-140, Ser-148, Tyr-203, Ser-237–Met-242, and Arg-259–Gly-261.

Belongs to the sulfotransferase 1 family.

It is found in the cytoplasm. Its subcellular location is the cytosol. It catalyses the reaction thyroxine + 3'-phosphoadenylyl sulfate = thyroxine sulfate + adenosine 3',5'-bisphosphate + H(+). Functionally, sulfotransferase that utilizes 3'-phospho-5'-adenylyl sulfate (PAPS) as sulfonate donor to catalyze the sulfate conjugation of thyroxine. Involved in the metabolism of thyroxine. The chain is Sulfotransferase 6B1 (SULT6B1) from Pan troglodytes (Chimpanzee).